The primary structure comprises 92 residues: uncharacterized protein (92 aa).

The signal sequence occupies residues 1–29 (MAAQTDYKKQVVGILLSLAFVLFVFSFSE).

This is an uncharacterized protein from Bacillus subtilis (strain 168).